A 164-amino-acid chain; its full sequence is T-cell surface glycoprotein CD3 zeta chain (164 aa).

The first 21 residues, 1–21 (MKWKVSVLACILHVRFPGAEA), serve as a signal peptide directing secretion. Q22 is modified (blocked amino end (Gln)). Residues 22–30 (QSFGLLDPK) are Extracellular-facing. A helical membrane pass occupies residues 31–51 (LCYLLDGILFIYGVIITALYL). The Cytoplasmic segment spans residues 52–164 (RAKFSRSAET…ALHMQTLAPR (113 aa)). Residue S58 is modified to Phosphoserine. ITAM domains lie at 61–89 (TAANLQDPNQLYNELNLGRREEYDVLEKK), 100–128 (QQRRRNPQEGVYNALQKDKMAEAYSEIGT), and 131–159 (ERRRGKGHDGLYQGLSTATKDTYDALHMQ). 2 positions are modified to phosphotyrosine: Y72 and Y83. The segment covering 87 to 96 (EKKRARDPEM) has biased composition (basic and acidic residues). The disordered stretch occupies residues 87–111 (EKKRARDPEMGGKQQRRRNPQEGVY). A phosphotyrosine mark is found at Y111, Y123, Y142, and Y153. The interval 124-143 (SEIGTKGERRRGKGHDGLYQ) is disordered.

The protein belongs to the CD3Z/FCER1G family. The TCR-CD3 complex is composed of a CD3D/CD3E and a CD3G/CD3E heterodimers that preferentially associate with TCRalpha and TCRbeta, respectively, to form TCRalpha/CD3E/CD3G and TCRbeta/CD3G/CD3E trimers. In turn, the hexamer interacts with CD3Z homodimer to form the TCR-CD3 complex. Alternatively, TCRalpha and TCRbeta can be replaced by TCRgamma and TCRdelta. Interacts with SLA. Interacts with SLA2. Interacts with TRAT1. Interacts with DOCK2. Interacts with SHB. Interacts with ZAP70. Interacts (tyrosine phosphorylated) with SHC1 (via SH2 domain). Interacts with PTPRC. Interacts with CRK; this interaction regulates CD3Z phosphorylation. Interacts (on T cell side) with CD81, ICAM1 and CD9 at immunological synapses between antigen-presenting cells and T cells. Interacts with CD160. Interacts with LY6E. Interacts with LY6E. The signaling subunit of immunoglobulin gamma (IgG) Fc receptor complex. As a homodimer or a heterodimer with FCER1G, associates with the ligand binding subunit FCGR3A (via transmembrane domain); this interaction is a prerequisite for Fc receptor complex expression on the cell surface. Interacts with CD5. Phosphorylated on Tyr residues after T-cell receptor triggering by LCK in association with CD4/CD8. As to expression, CD3Z is expressed in normal lymphoid tissue and in peripheral blood mononuclear cells (PBMCs). Expressed also in retinal ganglion cells.

Its subcellular location is the cell membrane. In terms of biological role, part of the TCR-CD3 complex present on T-lymphocyte cell surface that plays an essential role in adaptive immune response. When antigen presenting cells (APCs) activate T-cell receptor (TCR), TCR-mediated signals are transmitted across the cell membrane by the CD3 chains CD3D, CD3E, CD3G and CD3Z. All CD3 chains contain immunoreceptor tyrosine-based activation motifs (ITAMs) in their cytoplasmic domain. Upon TCR engagement, these motifs become phosphorylated by Src family protein tyrosine kinases LCK and FYN, resulting in the activation of downstream signaling pathways. CD3Z ITAMs phosphorylation creates multiple docking sites for the protein kinase ZAP70 leading to ZAP70 phosphorylation and its conversion into a catalytically active enzyme. Plays an important role in intrathymic T-cell differentiation. Additionally, participates in the activity-dependent synapse formation of retinal ganglion cells (RGCs) in both the retina and dorsal lateral geniculate nucleus (dLGN). This chain is T-cell surface glycoprotein CD3 zeta chain (Cd247), found in Mus musculus (Mouse).